Reading from the N-terminus, the 140-residue chain is Fatty acid-binding protein 12 (140 aa).

Residues Arg-107 and 127–129 (RTY) each bind a fatty acid.

The protein belongs to the calycin superfamily. Fatty-acid binding protein (FABP) family. Expressed in a number of retinoblastoma cell lines.

In terms of biological role, may play a role in lipid transport. The protein is Fatty acid-binding protein 12 (FABP12) of Homo sapiens (Human).